The following is a 366-amino-acid chain: Erythronate-4-phosphate dehydrogenase (366 aa).

Substrate contacts are provided by Ser46 and Thr67. The NAD(+) site is built by Asp147 and Thr175. Residue Arg208 is part of the active site. NAD(+) is bound at residue Asp228. The active site involves Glu233. Catalysis depends on His250, which acts as the Proton donor. Position 253 (Gly253) interacts with NAD(+). Residue Tyr254 coordinates substrate.

This sequence belongs to the D-isomer specific 2-hydroxyacid dehydrogenase family. PdxB subfamily. As to quaternary structure, homodimer.

It localises to the cytoplasm. It carries out the reaction 4-phospho-D-erythronate + NAD(+) = (R)-3-hydroxy-2-oxo-4-phosphooxybutanoate + NADH + H(+). The protein operates within cofactor biosynthesis; pyridoxine 5'-phosphate biosynthesis; pyridoxine 5'-phosphate from D-erythrose 4-phosphate: step 2/5. Catalyzes the oxidation of erythronate-4-phosphate to 3-hydroxy-2-oxo-4-phosphonooxybutanoate. In Coxiella burnetii (strain RSA 331 / Henzerling II), this protein is Erythronate-4-phosphate dehydrogenase.